Consider the following 350-residue polypeptide: Very-long-chain 3-oxoacyl-CoA reductase (350 aa).

Residues 28–48 form a helical membrane-spanning segment; it reads SLVLLAGIGALSVGTFALRLV. NADP(+)-binding residues include Val79, Asp134, Asn161, Lys196, Tyr228, Lys232, Val261, and Ser263. Catalysis depends on Tyr228, which acts as the Proton donor. Lys232 functions as the Lowers pKa of active site Tyr in the catalytic mechanism.

This sequence belongs to the short-chain dehydrogenases/reductases (SDR) family.

The protein resides in the endoplasmic reticulum membrane. The catalysed reaction is a very-long-chain (3R)-3-hydroxyacyl-CoA + NADP(+) = a very-long-chain 3-oxoacyl-CoA + NADPH + H(+). It functions in the pathway lipid metabolism; fatty acid biosynthesis. Functionally, component of the microsomal membrane bound fatty acid elongation system, which produces the 26-carbon very long-chain fatty acids (VLCFA) from palmitate. Catalyzes the reduction of the 3-ketoacyl-CoA intermediate that is formed in each cycle of fatty acid elongation. VLCFAs serve as precursors for ceramide and sphingolipids. In Mycosarcoma maydis (Corn smut fungus), this protein is Very-long-chain 3-oxoacyl-CoA reductase.